The primary structure comprises 138 residues: uncharacterized protein (138 aa).

The region spanning 9–133 is the MsrB domain; that stretch reads EDEWKKELGP…NSASLEFHNE (125 aa). Residues Cys49, Cys52, Cys97, and Cys100 each coordinate Zn(2+). The active-site Nucleophile is Cys122.

This sequence belongs to the MsrB Met sulfoxide reductase family. The cofactor is Zn(2+).

It is found in the cytoplasm. Its subcellular location is the nucleus. This is an uncharacterized protein from Schizosaccharomyces pombe (strain 972 / ATCC 24843) (Fission yeast).